We begin with the raw amino-acid sequence, 920 residues long: Rho GTPase-activating protein REN1 (920 aa).

Over residues 1–10 the composition is skewed to polar residues; that stretch reads MANKNAESSS. The segment at 1 to 64 is disordered; sequence MANKNAESSS…SRGGNTVFKS (64 aa). A compositionally biased stretch (low complexity) spans 17-31; the sequence is QPNQQQQQQPPIANE. Over residues 45–64 the composition is skewed to polar residues; the sequence is PAQSGNTDSRSRGGNTVFKS. One can recognise a PH domain in the interval 60-167; that stretch reads TVFKSGPLSI…WKAALENALT (108 aa). The Rho-GAP domain occupies 213-412; sequence LALEDVDGAP…TLLEEYESIF (200 aa). 3 disordered regions span residues 417-592, 719-825, and 837-920; these read LSPG…NLSM, RLGH…ALSK, and RSQI…TFSR. Acidic residues predominate over residues 434-463; that stretch reads EGSDDEEYDDDDDGSQGSEDYTDEEEDLEN. The segment covering 464 to 473 has biased composition (polar residues); that stretch reads ESNGSYSESA. Composition is skewed to basic and acidic residues over residues 475–491, 499–509, and 520–532; these read SEDK…HKIN, KSPKRSKEPKK, and PRHD…EDIV. Residues 555–568 show a composition bias toward polar residues; that stretch reads SSTSDVASDTQKPS. The segment covering 577–586 has biased composition (basic residues); sequence SKRHWGRTPG. Positions 598–728 form a coiled coil; the sequence is SVEVDEDNAD…RLGHHDGKAS (131 aa). 2 stretches are compositionally biased toward basic and acidic residues: residues 734–768 and 776–788; these read ASKE…RSTS and RENE…DSRS. Residues 814-825 show a composition bias toward low complexity; it reads EGSTTTTSALSK. Polar residues-rich tracts occupy residues 854 to 864 and 872 to 885; these read GQPSPTSGQNR and GSGS…SKLQ. The segment covering 889–903 has biased composition (basic and acidic residues); it reads ILDRGRSENGGDRGR. Over residues 910 to 920 the composition is skewed to polar residues; sequence HPNTTPRTFSR.

In terms of assembly, interacts with ARAC11/ROP1. Expressed in pollen and pollen tubes.

Its subcellular location is the cell membrane. Its function is as follows. Acts as a GTPase activator for the Rac-type GTPase by converting it to an inactive GDP-bound state. Maintains the global inactivation of ARAC11/ROP1 at the apex in pollen tubes in order to regulate the polar cell growth. The polypeptide is Rho GTPase-activating protein REN1 (REN1) (Arabidopsis thaliana (Mouse-ear cress)).